The sequence spans 157 residues: SsrA-binding protein (157 aa).

It belongs to the SmpB family.

Its subcellular location is the cytoplasm. Functionally, required for rescue of stalled ribosomes mediated by trans-translation. Binds to transfer-messenger RNA (tmRNA), required for stable association of tmRNA with ribosomes. tmRNA and SmpB together mimic tRNA shape, replacing the anticodon stem-loop with SmpB. tmRNA is encoded by the ssrA gene; the 2 termini fold to resemble tRNA(Ala) and it encodes a 'tag peptide', a short internal open reading frame. During trans-translation Ala-aminoacylated tmRNA acts like a tRNA, entering the A-site of stalled ribosomes, displacing the stalled mRNA. The ribosome then switches to translate the ORF on the tmRNA; the nascent peptide is terminated with the 'tag peptide' encoded by the tmRNA and targeted for degradation. The ribosome is freed to recommence translation, which seems to be the essential function of trans-translation. The polypeptide is SsrA-binding protein (Chlorobium chlorochromatii (strain CaD3)).